The chain runs to 509 residues: Cytochrome P450 monooxygenase ORF9 (509 aa).

The next 2 helical transmembrane spans lie at isoleucine 20 to valine 40 and leucine 309 to leucine 329. The N-linked (GlcNAc...) asparagine glycan is linked to asparagine 353. Cysteine 448 contacts heme.

Belongs to the cytochrome P450 family. The cofactor is heme.

It localises to the membrane. It functions in the pathway sesquiterpene biosynthesis. Functionally, cytochrome P450 monooxygenase; part of the gene cluster that mediates the biosynthesis of PR-toxin, a bicyclic sesquiterpene belonging to the eremophilane class and acting as a mycotoxin. The first step of the pathway is catalyzed by the aristolochene synthase which performs the cyclization of trans,trans-farnesyl diphosphate (FPP) to the bicyclic sesquiterpene aristolochene. Following the formation of aristolochene, the non-oxygenated aristolochene is converted to the trioxygenated intermediate eremofortin B, via 7-epi-neopetasone. This conversion appears to involve three enzymes, a hydroxysterol oxidase-like enzyme, the quinone-oxidase prx3 that forms the quinone-type-structure in the bicyclic nucleus of aristolochene with the C8-oxo group and the C-3 hydroxyl group, and the P450 monooxygenase ORF6 that introduces the epoxide at the double bond between carbons 1 and 2. No monoxy or dioxy-intermediates have been reported to be released to the broth, so these three early oxidative reactions may be coupled together. Eremofortin B is further oxidized by another P450 monooxygenase, that introduces a second epoxide between carbons 7 and 11 prior to acetylation to eremofortin A by the acetyltransferase ORF8. The second epoxidation may be performed by a second P450 monooxygenase. After the acetylation step, eremofortin A is converted to eremofortin C and then to PR-toxin. First the conversion of eremofortin A to eremofortin C proceeds by oxidation of the side chain of the molecule at C-12 and is catalyzed by the short-chain oxidoreductase prx1. The cytochrome P450 monooxygenase ORF6 is probably also involved in this step. The primary alcohol formed at C-12 is finally oxidized by the short-chain alcohol dehydrogenase prx4 that forms PR-toxin. The sequence is that of Cytochrome P450 monooxygenase ORF9 from Penicillium roqueforti (strain FM164).